The following is a 182-amino-acid chain: Putative manganese efflux pump MntP (182 aa).

A run of 6 helical transmembrane segments spans residues 6–26 (LIPLIIMAFALGMDAFSVSLG), 37–57 (ILYIGMTIGIFHIIMPFIGMV), 72–92 (FAGAILLIGLGFYIVYSSILE), 101–121 (IGISLFVFAFGVSIDSFSVGL), 131–151 (IITILLFGLISMLLAWMGLLL), and 162–182 (YGEIVGGIILVGFGLYLLFPI).

It belongs to the MntP (TC 9.B.29) family.

The protein localises to the cell membrane. Its function is as follows. Probably functions as a manganese efflux pump. The sequence is that of Putative manganese efflux pump MntP from Bacillus mycoides (strain KBAB4) (Bacillus weihenstephanensis).